Reading from the N-terminus, the 56-residue chain is MHVIDVDVRLYMSTFIIIDQSTENTSIDTTVTINIIYLAIMKIIMNIIMMIMIELV.

The chain crosses the membrane as a helical span at residues 33-53; the sequence is INIIYLAIMKIIMNIIMMIMI.

It is found in the host membrane. This is an uncharacterized protein from Bos taurus (Bovine).